A 225-amino-acid chain; its full sequence is UPF0758 protein AZOSEA04420 (225 aa).

In terms of domain architecture, MPN spans 102–225 (VFESPLAVRN…PLSFAERGLL (124 aa)). Histidine 173, histidine 175, and aspartate 186 together coordinate Zn(2+). A JAMM motif motif is present at residues 173 to 186 (HNHPSGAAEPSPAD).

It belongs to the UPF0758 family.

The chain is UPF0758 protein AZOSEA04420 from Aromatoleum aromaticum (strain DSM 19018 / LMG 30748 / EbN1) (Azoarcus sp. (strain EbN1)).